A 45-amino-acid polypeptide reads, in one-letter code: Photosystem II reaction center protein K (45 aa).

The propeptide occupies M1–A8. A helical membrane pass occupies residues A24–F44.

The protein belongs to the PsbK family. As to quaternary structure, PSII is composed of 1 copy each of membrane proteins PsbA, PsbB, PsbC, PsbD, PsbE, PsbF, PsbH, PsbI, PsbJ, PsbK, PsbL, PsbM, PsbT, PsbX, PsbY, PsbZ, Psb30/Ycf12, at least 3 peripheral proteins of the oxygen-evolving complex and a large number of cofactors. It forms dimeric complexes.

It localises to the plastid. The protein localises to the chloroplast thylakoid membrane. Functionally, one of the components of the core complex of photosystem II (PSII). PSII is a light-driven water:plastoquinone oxidoreductase that uses light energy to abstract electrons from H(2)O, generating O(2) and a proton gradient subsequently used for ATP formation. It consists of a core antenna complex that captures photons, and an electron transfer chain that converts photonic excitation into a charge separation. In Guillardia theta (Cryptophyte), this protein is Photosystem II reaction center protein K.